The primary structure comprises 127 residues: Large ribosomal subunit protein bL20 (127 aa).

It belongs to the bacterial ribosomal protein bL20 family.

Binds directly to 23S ribosomal RNA and is necessary for the in vitro assembly process of the 50S ribosomal subunit. It is not involved in the protein synthesizing functions of that subunit. In Streptomyces griseus subsp. griseus (strain JCM 4626 / CBS 651.72 / NBRC 13350 / KCC S-0626 / ISP 5235), this protein is Large ribosomal subunit protein bL20.